The following is a 345-amino-acid chain: Platelet-derived growth factor C (345 aa).

A signal peptide spans 1–22; sequence MLLLGLLLLTSALAGQRTGTRA. Over residues 24–33 the composition is skewed to polar residues; the sequence is SNLSSKLQLS. The segment at 24–45 is disordered; that stretch reads SNLSSKLQLSSDKEQNGVQDPR. Asn-25 carries an N-linked (GlcNAc...) asparagine glycan. The segment covering 34–45 has biased composition (basic and acidic residues); sequence SDKEQNGVQDPR. A CUB domain is found at 46 to 163; it reads HERVVTISGN…PGFCIHYSII (118 aa). The N-linked (GlcNAc...) asparagine glycan is linked to Asn-55. Cystine bridges form between Cys-104-Cys-124, Cys-250-Cys-294, Cys-280-Cys-335, and Cys-287-Cys-337.

The protein belongs to the PDGF/VEGF growth factor family. In terms of assembly, homodimer; disulfide-linked. Interacts with PDGFRA homodimers, and with heterodimers formed by PDGFRA and PDGFRB. Interacts (via CUB domain) with PLAT (via kringle domain). Proteolytic removal of the N-terminal CUB domain releasing the core domain is necessary for unmasking the receptor-binding epitopes of the core domain. Cleavage after basic residues in the hinge region (region connecting the CUB and growth factor domains) gives rise to the receptor-binding form. Cleaved by PLAT and PLG. Post-translationally, sumoylated by SUMO1. In terms of processing, N-glycosylated. As to expression, mainly expressed in kidney, testis, liver, heart and brain (at protein level). Highly expressed in airway epithelium, interstitial cells and alveolar macrophages in the lung of mice overexpressing IL13. Expressed in the ovaries.

The protein resides in the cytoplasm. It localises to the cytosol. It is found in the secreted. Its subcellular location is the nucleus. The protein localises to the cytoplasmic granule. The protein resides in the cell membrane. Functionally, growth factor that plays an essential role in the regulation of embryonic development, cell proliferation, cell migration, survival and chemotaxis. Potent mitogen and chemoattractant for cells of mesenchymal origin. Required for normal skeleton formation during embryonic development, especially for normal development of the craniofacial skeleton and for normal development of the palate. Required for normal skin morphogenesis during embryonic development. Plays an important role in wound healing, where it appears to be involved in three stages: inflammation, proliferation and remodeling. Plays an important role in angiogenesis and blood vessel development. Involved in fibrotic processes, in which transformation of interstitial fibroblasts into myofibroblasts plus collagen deposition occurs. The CUB domain has mitogenic activity in coronary artery smooth muscle cells, suggesting a role beyond the maintenance of the latency of the PDGF domain. In the nucleus, PDGFC seems to have additional function. The polypeptide is Platelet-derived growth factor C (Pdgfc) (Mus musculus (Mouse)).